The following is a 398-amino-acid chain: Bifunctional enzyme IspD/IspF (398 aa).

A 2-C-methyl-D-erythritol 4-phosphate cytidylyltransferase region spans residues 1–237 (MSISIAAIIL…QKKMQMFPDI (237 aa)). The segment at 238 to 398 (RVGNGYDVHS…SVLYPGEIPQ (161 aa)) is 2-C-methyl-D-erythritol 2,4-cyclodiphosphate synthase. D244 and H246 together coordinate a divalent metal cation. 4-CDP-2-C-methyl-D-erythritol 2-phosphate contacts are provided by residues 244–246 (DVH) and 270–271 (HS). H278 lines the a divalent metal cation pocket. 4-CDP-2-C-methyl-D-erythritol 2-phosphate contacts are provided by residues 292 to 294 (DIG), 368 to 371 (TTNE), F375, and R378.

The protein in the N-terminal section; belongs to the IspD/TarI cytidylyltransferase family. IspD subfamily. This sequence in the C-terminal section; belongs to the IspF family. It depends on a divalent metal cation as a cofactor.

It carries out the reaction 2-C-methyl-D-erythritol 4-phosphate + CTP + H(+) = 4-CDP-2-C-methyl-D-erythritol + diphosphate. It catalyses the reaction 4-CDP-2-C-methyl-D-erythritol 2-phosphate = 2-C-methyl-D-erythritol 2,4-cyclic diphosphate + CMP. Its pathway is isoprenoid biosynthesis; isopentenyl diphosphate biosynthesis via DXP pathway; isopentenyl diphosphate from 1-deoxy-D-xylulose 5-phosphate: step 2/6. It functions in the pathway isoprenoid biosynthesis; isopentenyl diphosphate biosynthesis via DXP pathway; isopentenyl diphosphate from 1-deoxy-D-xylulose 5-phosphate: step 4/6. Functionally, bifunctional enzyme that catalyzes the formation of 4-diphosphocytidyl-2-C-methyl-D-erythritol from CTP and 2-C-methyl-D-erythritol 4-phosphate (MEP) (IspD), and catalyzes the conversion of 4-diphosphocytidyl-2-C-methyl-D-erythritol 2-phosphate (CDP-ME2P) to 2-C-methyl-D-erythritol 2,4-cyclodiphosphate (ME-CPP) with a corresponding release of cytidine 5-monophosphate (CMP) (IspF). This chain is Bifunctional enzyme IspD/IspF, found in Bartonella tribocorum (strain CIP 105476 / IBS 506).